A 218-amino-acid polypeptide reads, in one-letter code: MRIILLGAPGAGKGTQAKIIEQKYNIAHISTGDMIRETIKSGSALGQELKKVLDAGELVSDEFIIKIVKDRISKNDCNNGFLLDGVPRTIPQAQELDKLGVNIDYIVEVDVADNLLIERITGRRIHPASGRTYHTKFNPPKVADKDDVTGEPLITRTDDNEDTVKQRLSVYHAQTAKLIDFYRNFSSTNTKIPKYIKINGDQAVEKVSQDIFDQLNKR.

10–15 (GAGKGT) contacts ATP. Residues 30–59 (STGDMIRETIKSGSALGQELKKVLDAGELV) are NMP. AMP-binding positions include T31, R36, 57-59 (ELV), and Q92. Positions 122-159 (GRRIHPASGRTYHTKFNPPKVADKDDVTGEPLITRTDD) are LID. ATP is bound by residues R123 and 132 to 133 (TY). R156 and R167 together coordinate AMP. Residue Q202 participates in ATP binding.

It belongs to the adenylate kinase family. In terms of assembly, monomer.

The protein resides in the cytoplasm. It catalyses the reaction AMP + ATP = 2 ADP. It participates in purine metabolism; AMP biosynthesis via salvage pathway; AMP from ADP: step 1/1. Its function is as follows. Catalyzes the reversible transfer of the terminal phosphate group between ATP and AMP. Plays an important role in cellular energy homeostasis and in adenine nucleotide metabolism. This is Adenylate kinase from Francisella tularensis subsp. tularensis (strain FSC 198).